A 264-amino-acid chain; its full sequence is MKAVVLAVALVFLTGSQAWHVWQQDEPQSQWDKVKDFANVYVDAVKDSGRDYVSQFESSSLGQQLNLNLLENWDTLGSTVSQLQERLGPLTRDFWDNLEKETDWVRQEMNKDLEEVKQKVQPYLDEFQKKWKEDVELYRQKVAPLGAELQESARQKLQELQGRLSPVAEEFRDRMRTHVDSLRTQLAPHSEQMRESLAQRLAELKSNPTLNEYHTRAKTHLKTLGEKARPALEDLRHSLMPMLETLKTQVQSVIDKASETLTAQ.

Residues 1-18 (MKAVVLAVALVFLTGSQA) form the signal peptide. Repeat copies occupy residues 67–88 (LNLLENWDTLGSTVSQLQERLG) and 89–110 (PLTRDFWDNLEKETDWVRQEMN). The segment at 67–264 (LNLLENWDTL…DKASETLTAQ (198 aa)) is 10 X approximate tandem repeats. Met-109 carries the post-translational modification Methionine sulfoxide. Residues 111–121 (KDLEEVKQKVQ) form a 3; half-length repeat. Tandem repeats lie at residues 122–143 (PYLDEFQKKWKEDVELYRQKVA), 144–165 (PLGAELQESARQKLQELQGRLS), and 166–187 (PVAEEFRDRMRTHVDSLRTQLA). The stretch at 188-207 (PHSEQMRESLAQRLAELKSN) is one 7; truncated repeat. Residue Met-193 is modified to Methionine sulfoxide. Copy 8 of the repeat occupies 208-229 (PTLNEYHTRAKTHLKTLGEKAR). One copy of the 9; half-length repeat lies at 230–240 (PALEDLRHSLM). Methionine sulfoxide is present on residues Met-240 and Met-242. The stretch at 241–264 (PMLETLKTQVQSVIDKASETLTAQ) is repeat 10.

The protein belongs to the apolipoprotein A1/A4/E family. Homodimer. Interacts with APOA1BP and CLU. Component of a sperm activating protein complex (SPAP), consisting of APOA1, an immunoglobulin heavy chain, an immunoglobulin light chain and albumin. Interacts with NDRG1. Interacts with SCGB3A2. Interacts with NAXE and YJEFN3. Post-translationally, glycosylated. In terms of processing, palmitoylated. May be acylated. Post-translationally, phosphorylation sites are present in the extracellular medium. As to expression, major protein of plasma HDL, also found in chylomicrons.

Its subcellular location is the secreted. Functionally, participates in the reverse transport of cholesterol from tissues to the liver for excretion by promoting cholesterol efflux from tissues and by acting as a cofactor for the lecithin cholesterol acyltransferase (LCAT). As part of the SPAP complex, activates spermatozoa motility. This Mus musculus (Mouse) protein is Apolipoprotein A-I (Apoa1).